We begin with the raw amino-acid sequence, 81 residues long: Acyl carrier protein (81 aa).

A Carrier domain is found at 1–79; sequence MDVAAMQVKI…DIFDYLAKNK (79 aa). At serine 39 the chain carries O-(pantetheine 4'-phosphoryl)serine.

This sequence belongs to the acyl carrier protein (ACP) family. Post-translationally, 4'-phosphopantetheine is transferred from CoA to a specific serine of apo-ACP by AcpS. This modification is essential for activity because fatty acids are bound in thioester linkage to the sulfhydryl of the prosthetic group.

It localises to the cytoplasm. It functions in the pathway lipid metabolism; fatty acid biosynthesis. Carrier of the growing fatty acid chain in fatty acid biosynthesis. The chain is Acyl carrier protein from Syntrophobacter fumaroxidans (strain DSM 10017 / MPOB).